The sequence spans 211 residues: Outer-membrane lipoprotein carrier protein (211 aa).

A signal peptide spans 1–24 (MNTIKILIGLLGIFLFSLSGIVSA).

This sequence belongs to the LolA family. Monomer.

It localises to the periplasm. Functionally, participates in the translocation of lipoproteins from the inner membrane to the outer membrane. Only forms a complex with a lipoprotein if the residue after the N-terminal Cys is not an aspartate (The Asp acts as a targeting signal to indicate that the lipoprotein should stay in the inner membrane). This Coxiella burnetii (strain CbuK_Q154) (Coxiella burnetii (strain Q154)) protein is Outer-membrane lipoprotein carrier protein.